The chain runs to 505 residues: Actin nucleation-promoting factor WASL (505 aa).

Position 2 is an N-acetylserine (serine 2). Residues 34 to 141 (LGKKCVTMSS…KAVTDLLGRR (108 aa)) enclose the WH1 domain. 2 disordered regions span residues 138-163 (LGRR…ATVD) and 185-205 (TKEK…DIGT). Basic residues predominate over residues 186–198 (KEKKKGKAKKKRL). A CRIB domain is found at 203-216 (IGTPSNFQHIGHVG). At serine 242 the chain carries Phosphoserine; by TNK2. Tyrosine 256 carries the phosphotyrosine; by FAK1 and TNK2 modification. Disordered stretches follow at residues 266-406 (EAVK…AGSK), 449-468 (SVTD…SGIV), and 477-505 (KRSK…EWED). Composition is skewed to pro residues over residues 276–349 (APPP…PLPA), 356–365 (SGPPPPPPPL), and 372–391 (APPP…PPGL). At arginine 307 the chain carries Omega-N-methylarginine. WH2 domains follow at residues 405–422 (SKAA…LKKV) and 433–450 (GRDA…LKSV). 2 positions are modified to phosphoserine: serine 484 and serine 485. Over residues 486–505 (DEDEDEDDDEDFEDDDEWED) the composition is skewed to acidic residues.

Binds actin and the Arp2/3 complex. Interacts with CDC42. Interacts with FCHSD1. Interacts with FCHSD2. Binds to SH3 domains of GRB2. Interacts with the C-terminal SH3 domain of DNMBP. Interacts with SNX9. Interacts with the WW domains of PRPF40A/FBP11. Interacts with PTK2/FAK1. Interacts with PACSIN1, PACSIN2 and PACSIN3. Interacts with NOSTRIN. Binds to TNK2. Interacts with SNX33. Interacts with NONO (via second RRM domain); the interaction is direct. Component of a multiprotein complex with NONO and SFPQ; associates with the complex via direct interaction with NONO. Post-translationally, phosphorylation at Ser-242, Tyr-256, Ser-484 and Ser-485 enhances actin polymerization activity.

It localises to the cytoplasm. The protein localises to the cytoskeleton. Its subcellular location is the nucleus. Its function is as follows. Regulates actin polymerization by stimulating the actin-nucleating activity of the Arp2/3 complex. Involved in various processes, such as mitosis and cytokinesis, via its role in the regulation of actin polymerization. Together with CDC42, involved in the extension and maintenance of the formation of thin, actin-rich surface projections called filopodia. In addition to its role in the cytoplasm, also plays a role in the nucleus by regulating gene transcription, probably by promoting nuclear actin polymerization. Binds to HSF1/HSTF1 and forms a complex on heat shock promoter elements (HSE) that negatively regulates HSP90 expression. Plays a role in dendrite spine morphogenesis. In Bos taurus (Bovine), this protein is Actin nucleation-promoting factor WASL (WASL).